Consider the following 453-residue polypeptide: Phosphoglucosamine mutase (453 aa).

Catalysis depends on S102, which acts as the Phosphoserine intermediate. 4 residues coordinate Mg(2+): S102, D244, D246, and D248. S102 is subject to Phosphoserine.

The protein belongs to the phosphohexose mutase family. Mg(2+) serves as cofactor. Activated by phosphorylation.

The catalysed reaction is alpha-D-glucosamine 1-phosphate = D-glucosamine 6-phosphate. In terms of biological role, catalyzes the conversion of glucosamine-6-phosphate to glucosamine-1-phosphate. The chain is Phosphoglucosamine mutase from Pelobacter propionicus (strain DSM 2379 / NBRC 103807 / OttBd1).